The following is a 252-amino-acid chain: ATP synthase subunit a (252 aa).

The next 6 helical transmembrane spans lie at 29–49 (FTNSALFMVATVVVAAAFLFL), 87–107 (FFPLVFSLFMFVLVANLLGLF), 117–137 (IIVTFGLAILVIGTVIVYGFM), 146–166 (LFVPKGVPLVMMVLVVPIEVI), 188–208 (ITLKVFSGFVVSLSALGAVGV), and 211–231 (SILPLAMAVALTALELLVAFL).

It belongs to the ATPase A chain family. In terms of assembly, F-type ATPases have 2 components, CF(1) - the catalytic core - and CF(0) - the membrane proton channel. CF(1) has five subunits: alpha(3), beta(3), gamma(1), delta(1), epsilon(1). CF(0) has three main subunits: a(1), b(2) and c(9-12). The alpha and beta chains form an alternating ring which encloses part of the gamma chain. CF(1) is attached to CF(0) by a central stalk formed by the gamma and epsilon chains, while a peripheral stalk is formed by the delta and b chains.

It localises to the cell inner membrane. In terms of biological role, key component of the proton channel; it plays a direct role in the translocation of protons across the membrane. The polypeptide is ATP synthase subunit a (Mesorhizobium japonicum (strain LMG 29417 / CECT 9101 / MAFF 303099) (Mesorhizobium loti (strain MAFF 303099))).